The sequence spans 580 residues: Extracellular protease (580 aa).

The N-terminal stretch at 1-32 (MSTASLRKRTGSLTILGASALTSLLLAMPAFA) is a signal peptide. Residues 33–136 (GEVYLDGLAT…VEVDQILHAT (104 aa)) constitute a propeptide that is removed on maturation. Residues 147–465 (QWAFGTTNAG…AGIVNADAAV (319 aa)) enclose the Peptidase S8 domain. Active-site charge relay system residues include D177 and H237. Disulfide bonds link C225–C273 and C315–C352. Residue S409 is the Charge relay system of the active site. A disulfide bridge links C450 with C454.

This sequence belongs to the peptidase S8 family.

It localises to the secreted. The protein is Extracellular protease of Xanthomonas campestris pv. campestris (strain ATCC 33913 / DSM 3586 / NCPPB 528 / LMG 568 / P 25).